The primary structure comprises 243 residues: DNA repair protein RecO (243 aa).

It belongs to the RecO family.

In terms of biological role, involved in DNA repair and RecF pathway recombination. In Vibrio vulnificus (strain CMCP6), this protein is DNA repair protein RecO.